A 204-amino-acid chain; its full sequence is Endothelin-3 (204 aa).

A signal peptide spans 1-17 (MELRLWFLFGLTVTSAA). The disordered stretch occupies residues 18 to 71 (GPVPRPQPGDAGRSGVPRAPSATKETMAMVATRGPSPRSSGQEQEPGPFGELAA). The propeptide occupies 18–80 (GPVPRPQPGD…AKGGPVRYRA (63 aa)). 2 disulfides stabilise this stretch: cysteine 83-cysteine 97 and cysteine 85-cysteine 93. A propeptide spanning residues 104–204 (INTPERTVPY…KSRTDKARRL (101 aa)) is cleaved from the precursor. Residues 115–140 (LSNHRGSVRGRRSAGPSPQSSQPSRG) form a disordered region. Residues 127–140 (SAGPSPQSSQPSRG) show a composition bias toward low complexity. The interval 144–158 (CACAESQDRACVYFC) is endothelin-like. The tract at residues 166-204 (GASRTPETPDKEAGKPAGRATGGLHPRRLKSRTDKARRL) is disordered.

Belongs to the endothelin/sarafotoxin family.

The protein resides in the secreted. Its function is as follows. Endothelins are endothelium-derived vasoconstrictor peptides. The sequence is that of Endothelin-3 (EDN3) from Sus scrofa (Pig).